The primary structure comprises 252 residues: Thiazole synthase (252 aa).

K98 functions as the Schiff-base intermediate with DXP in the catalytic mechanism. 1-deoxy-D-xylulose 5-phosphate-binding positions include G159, 185–186, and 207–208; these read AG and AT.

This sequence belongs to the ThiG family. In terms of assembly, homotetramer. Forms heterodimers with either ThiH or ThiS.

Its subcellular location is the cytoplasm. It catalyses the reaction [ThiS sulfur-carrier protein]-C-terminal-Gly-aminoethanethioate + 2-iminoacetate + 1-deoxy-D-xylulose 5-phosphate = [ThiS sulfur-carrier protein]-C-terminal Gly-Gly + 2-[(2R,5Z)-2-carboxy-4-methylthiazol-5(2H)-ylidene]ethyl phosphate + 2 H2O + H(+). It participates in cofactor biosynthesis; thiamine diphosphate biosynthesis. Its function is as follows. Catalyzes the rearrangement of 1-deoxy-D-xylulose 5-phosphate (DXP) to produce the thiazole phosphate moiety of thiamine. Sulfur is provided by the thiocarboxylate moiety of the carrier protein ThiS. In vitro, sulfur can be provided by H(2)S. The sequence is that of Thiazole synthase from Mycolicibacterium smegmatis (strain ATCC 700084 / mc(2)155) (Mycobacterium smegmatis).